The sequence spans 167 residues: Ribosome maturation factor RimM (167 aa).

A PRC barrel domain is found at 94–166 (DDRAWLHELE…YIHVPRFDEF (73 aa)).

Belongs to the RimM family. In terms of assembly, binds ribosomal protein uS19.

Its subcellular location is the cytoplasm. In terms of biological role, an accessory protein needed during the final step in the assembly of 30S ribosomal subunit, possibly for assembly of the head region. Essential for efficient processing of 16S rRNA. May be needed both before and after RbfA during the maturation of 16S rRNA. It has affinity for free ribosomal 30S subunits but not for 70S ribosomes. This chain is Ribosome maturation factor RimM, found in Chlorobium luteolum (strain DSM 273 / BCRC 81028 / 2530) (Pelodictyon luteolum).